The chain runs to 961 residues: Gamma-tubulin small complex component GCP2 (961 aa).

Residues 15–76 (NLHRSPKLAT…KPSIPPLKSE (62 aa)) are disordered. Positions 43–54 (LGSNVVSHPTRS) are enriched in polar residues. The segment covering 55–65 (SPEKTTDKPAD) has biased composition (basic and acidic residues).

This sequence belongs to the TUBGCP family. In terms of assembly, component of the gamma-tubulin small complex (gamma-TuSC) composed of tubulin gamma chain, gamma-tubulin complex protein 2 (GCP2) and gamma-tubulin complex protein 3 (GCP3). Interacts with tubulin gamma chain.

Its subcellular location is the cytoplasm. The protein resides in the cytoskeleton. It localises to the flagellum axoneme. The protein localises to the flagellum basal body. Functionally, component of the gamma-tubulin small complex (gamma-TuSC) involved in microtubule (MT) nucleation for the formation of median bodies and in the biogenesis of flagella. Gamma-TuSC may be required for the correct positioning of EB1 within the trophozoites. The chain is Gamma-tubulin small complex component GCP2 from Giardia intestinalis (strain ATCC 50803 / WB clone C6) (Giardia lamblia).